The following is a 229-amino-acid chain: Nisin biosynthesis regulatory protein NisR (229 aa).

One can recognise a Response regulatory domain in the interval 4-117 (KILIVDDDQE…QLVAKVEANI (114 aa)). Asp-53 carries the 4-aspartylphosphate modification. The segment at residues 132–229 (EIRRDLGPIT…VRGLGYQWHG (98 aa)) is a DNA-binding region (ompR/PhoB-type).

Phosphorylated by NisK.

Its function is as follows. Member of the two-component regulatory system NisK/NisR involved in the regulation of the biosynthesis of lantibiotic nisin. NisR may function as a regulatory protein. The chain is Nisin biosynthesis regulatory protein NisR (nisR) from Lactococcus lactis subsp. lactis (Streptococcus lactis).